Consider the following 432-residue polypeptide: Adenylosuccinate synthetase (432 aa).

GTP-binding positions include 13 to 19 (GDEGKGK) and 41 to 43 (GHT). The active-site Proton acceptor is the D14. Positions 14 and 41 each coordinate Mg(2+). IMP is bound by residues 14–17 (DEGK), 39–42 (NAGH), T130, R144, Q225, T240, and R304. H42 (proton donor) is an active-site residue. Residue 300-306 (ATTGRRR) participates in substrate binding. GTP-binding positions include R306, 332–334 (KLD), and 415–417 (STG).

The protein belongs to the adenylosuccinate synthetase family. In terms of assembly, homodimer. Requires Mg(2+) as cofactor.

The protein localises to the cytoplasm. The catalysed reaction is IMP + L-aspartate + GTP = N(6)-(1,2-dicarboxyethyl)-AMP + GDP + phosphate + 2 H(+). It functions in the pathway purine metabolism; AMP biosynthesis via de novo pathway; AMP from IMP: step 1/2. In terms of biological role, plays an important role in the de novo pathway of purine nucleotide biosynthesis. Catalyzes the first committed step in the biosynthesis of AMP from IMP. This Erwinia tasmaniensis (strain DSM 17950 / CFBP 7177 / CIP 109463 / NCPPB 4357 / Et1/99) protein is Adenylosuccinate synthetase.